A 104-amino-acid chain; its full sequence is Putative membrane protein insertion efficiency factor (104 aa).

A disordered region spans residues 83 to 104 (SSPTPLAESPDDRTVPHTQETS).

Belongs to the UPF0161 family.

It localises to the cell inner membrane. Functionally, could be involved in insertion of integral membrane proteins into the membrane. The protein is Putative membrane protein insertion efficiency factor of Chlamydia trachomatis serovar D (strain ATCC VR-885 / DSM 19411 / UW-3/Cx).